The sequence spans 206 residues: MPKLLYLSVSPRAENSYSRQAGARMIAWLERRHGPLTVIDRDLAADPVPHIDGAMARASLMPAADRGPAEHAALALSETLIGELEAADIVLISTPMHNFTVPSALKAWIDHVVRSNRTFRSTPAGKVGLLADRPVLAVVSCGGPFHDGPGSQRDMMTPYLQYVFGSVGITQVEVVRMENMARGEDFVARGFERLNAWTGSLAIRAA.

FMN is bound by residues serine 10, 16–18, and 140–143; these read SYS and SCGG.

This sequence belongs to the azoreductase type 1 family. As to quaternary structure, homodimer. Requires FMN as cofactor.

It catalyses the reaction 2 a quinone + NADH + H(+) = 2 a 1,4-benzosemiquinone + NAD(+). The catalysed reaction is N,N-dimethyl-1,4-phenylenediamine + anthranilate + 2 NAD(+) = 2-(4-dimethylaminophenyl)diazenylbenzoate + 2 NADH + 2 H(+). Functionally, quinone reductase that provides resistance to thiol-specific stress caused by electrophilic quinones. Also exhibits azoreductase activity. Catalyzes the reductive cleavage of the azo bond in aromatic azo compounds to the corresponding amines. This chain is FMN-dependent NADH:quinone oxidoreductase 2, found in Cupriavidus pinatubonensis (strain JMP 134 / LMG 1197) (Cupriavidus necator (strain JMP 134)).